A 289-amino-acid polypeptide reads, in one-letter code: Undecaprenyl-diphosphatase (289 aa).

A run of 8 helical transmembrane segments spans residues 23–43, 56–76, 104–124, 135–155, 165–185, 210–230, 235–255, and 269–289; these read LFLGIIQGLTEFFPISSTAHL, GVAVTASLQLGSIIALIAYFW, SAIVLGTLPIVFAGMLIKLFW, IPAIAVVSIVMALLLLIAENV, LSFWDGQIIGFSQVLALIPGV, FLLGIPAITLAGLVELKQAFG, VDVFPLLLGITSSAISSWIAI, and IFITYRFLFGTLLLFWYYLAF.

The protein belongs to the UppP family.

The protein localises to the cell inner membrane. The enzyme catalyses di-trans,octa-cis-undecaprenyl diphosphate + H2O = di-trans,octa-cis-undecaprenyl phosphate + phosphate + H(+). In terms of biological role, catalyzes the dephosphorylation of undecaprenyl diphosphate (UPP). Confers resistance to bacitracin. This chain is Undecaprenyl-diphosphatase, found in Prochlorococcus marinus (strain SARG / CCMP1375 / SS120).